The primary structure comprises 592 residues: Delta-like protein 3 (592 aa).

The signal sequence occupies residues 1-32; that stretch reads MVSLQVSPLSQTLILAFLLPQALPAGVFELQI. Residues 33 to 490 are Extracellular-facing; it reads HSFGPGPGLG…LRQADPQRFL (458 aa). The DSL domain occupies 174-213; it reads ARCEPPAVGAACARLCRSRSAPSRCGPGLRPCTPFPDECE. EGF-like domains lie at 214–247, 272–308, 310–349, 351–387, 389–425, and 427–463; these read APSVCRPGCSPEHGYCEEPDECRCLEGWTGPLCT, GPGPCDGNPCANGGSCSETSGSFECACPRGFYGLRCE, SGVTCADGPCFNGGLCVGGEDPDSAYVCHCPPGFQGSNCE, RVDRCSLQPCQNGGLCLDLGHALRCRCRAGFAGPRCE, DLDDCAGRACANGGTCVEGGGSRRCSCALGFGGRDCR, and RADPCASRPCAHGGRCYAHFSGLVCACAPGYMGVRCE. Disulfide bonds link Cys-218–Cys-229, Cys-222–Cys-235, Cys-237–Cys-246, Cys-276–Cys-287, Cys-281–Cys-296, Cys-298–Cys-307, Cys-314–Cys-325, Cys-319–Cys-337, Cys-339–Cys-348, Cys-355–Cys-366, Cys-360–Cys-375, Cys-377–Cys-386, Cys-393–Cys-404, Cys-398–Cys-413, Cys-415–Cys-424, Cys-431–Cys-442, Cys-436–Cys-451, and Cys-453–Cys-462. The helical transmembrane segment at 491 to 511 threads the bilayer; sequence LPPALGLLVAAGLAGAALLVI. Topologically, residues 512-592 are cytoplasmic; the sequence is HVRRRGPGQD…REDWLIQVLF (81 aa). The segment at 548–567 is disordered; it reads QDGAGDGPSSSADWNHPEDG.

As to quaternary structure, can bind and activate Notch-1 or another Notch receptor. Post-translationally, ubiquitinated by MIB (MIB1 or MIB2), leading to its endocytosis and subsequent degradation. Predominantly expressed in the neuroectoderm and paraxial mesoderm during embryogenesis.

Its subcellular location is the membrane. Functionally, inhibits primary neurogenesis. May be required to divert neurons along a specific differentiation pathway. Plays a role in the formation of somite boundaries during segmentation of the paraxial mesoderm. This Mus musculus (Mouse) protein is Delta-like protein 3 (Dll3).